The primary structure comprises 319 residues: Homoserine dehydrogenase (319 aa).

The NADPH site is built by Phe-10, Thr-12, Val-13, Arg-40, Lys-57, Ser-92, Ser-93, Ser-114, and Lys-116. Val-13 contacts NAD(+). Val-13 and Arg-40 together coordinate NADP(+). Ser-92 is an NAD(+) binding site. Ser-92 provides a ligand contact to NADP(+). Residues Ser-114 and Lys-116 each coordinate NADP(+). Na(+) is bound by residues Glu-140, Val-143, Ala-145, and Thr-147. Residues Gly-197 and Glu-200 each coordinate NADP(+). Positions 200 and 211 each coordinate L-homoserine. Lys-215 functions as the Proton donor in the catalytic mechanism. NADPH is bound at residue Gly-296. An NAD(+)-binding site is contributed by Gly-296. Gly-296 contributes to the NADP(+) binding site.

It belongs to the homoserine dehydrogenase family. As to quaternary structure, homodimer. The cofactor is a metal cation.

The catalysed reaction is L-homoserine + NAD(+) = L-aspartate 4-semialdehyde + NADH + H(+). The protein operates within amino-acid biosynthesis; L-methionine biosynthesis via de novo pathway; L-homoserine from L-aspartate: step 3/3. It participates in amino-acid biosynthesis; L-threonine biosynthesis; L-threonine from L-aspartate: step 3/5. Its function is as follows. Catalyzes the conversion of L-aspartate-beta-semialdehyde (L-Asa) to L-homoserine (L-Hse), the third step in the biosynthesis of threonine and methionine from aspartate. Utilizes NADH but not NADPH as coenzyme. The protein is Homoserine dehydrogenase of Pyrococcus horikoshii (strain ATCC 700860 / DSM 12428 / JCM 9974 / NBRC 100139 / OT-3).